The following is a 279-amino-acid chain: Tryptophan 2,3-dioxygenase (279 aa).

Substrate-binding positions include 48-52, tyrosine 110, and arginine 114; that span reads FIVIH. A heme-binding site is contributed by histidine 237. Threonine 251 is a binding site for substrate.

The protein belongs to the tryptophan 2,3-dioxygenase family. In terms of assembly, homotetramer. It depends on heme as a cofactor.

It carries out the reaction L-tryptophan + O2 = N-formyl-L-kynurenine. It participates in amino-acid degradation; L-tryptophan degradation via kynurenine pathway; L-kynurenine from L-tryptophan: step 1/2. Functionally, heme-dependent dioxygenase that catalyzes the oxidative cleavage of the L-tryptophan (L-Trp) pyrrole ring and converts L-tryptophan to N-formyl-L-kynurenine. Catalyzes the oxidative cleavage of the indole moiety. In Bacillus cereus (strain ATCC 10987 / NRS 248), this protein is Tryptophan 2,3-dioxygenase.